A 500-amino-acid chain; its full sequence is Probable cardiolipin synthase YwiE (500 aa).

3 helical membrane-spanning segments follow: residues 6–26 (LEFF…FFPV), 31–51 (FYGG…SLIL), and 59–79 (TLLW…FYLF). PLD phosphodiesterase domains follow at residues 237–264 (LNFR…GKEY) and 413–440 (QKGF…DMRS). Residues His-242, Lys-244, Asp-249, His-418, Lys-420, and Asp-425 contribute to the active site.

Belongs to the phospholipase D family. Cardiolipin synthase subfamily.

It is found in the cell membrane. The enzyme catalyses 2 a 1,2-diacyl-sn-glycero-3-phospho-(1'-sn-glycerol) = a cardiolipin + glycerol. Its function is as follows. Catalyzes the reversible phosphatidyl group transfer from one phosphatidylglycerol molecule to another to form cardiolipin (CL) (diphosphatidylglycerol) and glycerol. May have a role in the heat shock response since the level of the transcript of ywiE increases after a heat shock. This Bacillus subtilis (strain 168) protein is Probable cardiolipin synthase YwiE (ywiE).